A 500-amino-acid polypeptide reads, in one-letter code: Prostacyclin synthase (500 aa).

A helical transmembrane segment spans residues M1–T20. Substrate contacts are provided by residues R106, L112, N287, T358 to R359, and R382. C441 provides a ligand contact to heme.

This sequence belongs to the cytochrome P450 family. It depends on heme as a cofactor.

The protein localises to the endoplasmic reticulum membrane. It catalyses the reaction prostaglandin H2 = prostaglandin I2. The enzyme catalyses a hydroperoxyeicosatetraenoate = an oxoeicosatetraenoate + H2O. The catalysed reaction is (15S)-hydroperoxy-(5Z,8Z,11Z,13E)-eicosatetraenoate = 15-oxo-(5Z,8Z,11Z,13E)-eicosatetraenoate + H2O. It carries out the reaction (15S)-hydroperoxy-(5Z,8Z,11Z,13E)-eicosatetraenoate + AH2 = (15S)-hydroxy-(5Z,8Z,11Z,13E)-eicosatetraenoate + A + H2O. Its function is as follows. Catalyzes the biosynthesis and metabolism of eicosanoids. Catalyzes the isomerization of prostaglandin H2 to prostacyclin (= prostaglandin I2), a potent mediator of vasodilation and inhibitor of platelet aggregation. Additionally, displays dehydratase activity, toward hydroperoxyeicosatetraenoates (HPETEs), especially toward (15S)-hydroperoxy-(5Z,8Z,11Z,13E)-eicosatetraenoate (15(S)-HPETE). This chain is Prostacyclin synthase (PTGIS), found in Bos taurus (Bovine).